Here is a 350-residue protein sequence, read N- to C-terminus: Erythronate-4-phosphate dehydrogenase (350 aa).

2 residues coordinate substrate: S45 and T66. NAD(+) is bound by residues 124 to 125 (QV), D144, 203 to 205 (ASR), and D226. R205 is a catalytic residue. E231 is a catalytic residue. Residue H248 is the Proton donor of the active site. Residue G251 participates in NAD(+) binding.

Belongs to the D-isomer specific 2-hydroxyacid dehydrogenase family. PdxB subfamily. As to quaternary structure, homodimer.

It localises to the cytoplasm. It carries out the reaction 4-phospho-D-erythronate + NAD(+) = (R)-3-hydroxy-2-oxo-4-phosphooxybutanoate + NADH + H(+). It functions in the pathway cofactor biosynthesis; pyridoxine 5'-phosphate biosynthesis; pyridoxine 5'-phosphate from D-erythrose 4-phosphate: step 2/5. In terms of biological role, catalyzes the oxidation of erythronate-4-phosphate to 3-hydroxy-2-oxo-4-phosphonooxybutanoate. This chain is Erythronate-4-phosphate dehydrogenase, found in Legionella pneumophila subsp. pneumophila (strain Philadelphia 1 / ATCC 33152 / DSM 7513).